Consider the following 81-residue polypeptide: Sulfur carrier protein TusA (81 aa).

Cys19 acts as the Cysteine persulfide intermediate in catalysis.

It belongs to the sulfur carrier protein TusA family.

The protein resides in the cytoplasm. In terms of biological role, sulfur carrier protein which probably makes part of a sulfur-relay system. The polypeptide is Sulfur carrier protein TusA (Shewanella frigidimarina (strain NCIMB 400)).